The chain runs to 205 residues: Ras-related protein Rab-1A (205 aa).

At Ser2 the chain carries N-acetylserine. Positions 20, 21, 23, 24, 25, 26, 38, and 43 each coordinate GTP. Ser25 is a binding site for Mg(2+). The short motif at 34 to 48 (DTYTESYISTIGVDF) is the Switch 1 element. Thr43 provides a ligand contact to Mg(2+). Glycyl lysine isopeptide (Lys-Gly) (interchain with G-Cter in ubiquitin) cross-links involve residues Lys49 and Lys61. Asp66 serves as a coordination point for Mg(2+). The short motif at 66–83 (DTAGQERFRTITSSYYRG) is the Switch 2 element. Residues Gly69, Asn124, Lys125, Asp127, Ala155, and Lys156 each coordinate GTP. The segment at 178–205 (PGATAGGAEKSNVKIQSTPVKQSGGGCC) is disordered. Residue Ser194 is modified to Phosphoserine. S-geranylgeranyl cysteine attachment occurs at residues Cys204 and Cys205.

Belongs to the small GTPase superfamily. Rab family. May interact with YIPF5. Interacts with C9orf72; the interaction mediates recruitment of RAB1A to the ATG1/ULK1 kinase complex. Interacts with GDI1; this promotes dissociation from membranes. Requires Mg(2+) as cofactor. In terms of processing, phosphorylated by CDK1 kinase during mitosis. Ubiquitinated via 'Lys-11'-linked ubiquitination on Lys-49 and Lys-61; impairing the recruitment of guanosine diphosphate (GDP) dissociation inhibitor 1/GDI1.

Its subcellular location is the golgi apparatus. It localises to the endoplasmic reticulum. The protein resides in the early endosome. It is found in the cytoplasm. The protein localises to the cytosol. Its subcellular location is the membrane. It localises to the melanosome. The enzyme catalyses GTP + H2O = GDP + phosphate + H(+). Regulated by guanine nucleotide exchange factors (GEFs) which promote the exchange of bound GDP for free GTP. Regulated by GTPase activating proteins (GAPs) which increase the GTP hydrolysis activity. Inhibited by GDP dissociation inhibitors (GDIs). The small GTPases Rab are key regulators of intracellular membrane trafficking, from the formation of transport vesicles to their fusion with membranes. Rabs cycle between an inactive GDP-bound form and an active GTP-bound form that is able to recruit to membranes different sets of downstream effectors directly responsible for vesicle formation, movement, tethering and fusion. RAB1A regulates vesicular protein transport from the endoplasmic reticulum (ER) to the Golgi compartment and on to the cell surface, and plays a role in IL-8 and growth hormone secretion. Required to modulate the compacted morphology of the Golgi. Regulates the level of CASR present at the cell membrane. Plays a role in cell adhesion and cell migration, via its role in protein trafficking. Plays a role in autophagosome assembly and cellular defense reactions against pathogenic bacteria. Plays a role in microtubule-dependent protein transport by early endosomes and in anterograde melanosome transport. The polypeptide is Ras-related protein Rab-1A (RAB1A) (Canis lupus familiaris (Dog)).